Consider the following 331-residue polypeptide: 6-phosphogluconolactonase (331 aa).

Belongs to the cycloisomerase 2 family.

The catalysed reaction is 6-phospho-D-glucono-1,5-lactone + H2O = 6-phospho-D-gluconate + H(+). It participates in carbohydrate degradation; pentose phosphate pathway; D-ribulose 5-phosphate from D-glucose 6-phosphate (oxidative stage): step 2/3. Functionally, catalyzes the hydrolysis of 6-phosphogluconolactone to 6-phosphogluconate. The sequence is that of 6-phosphogluconolactonase from Klebsiella pneumoniae (strain 342).